Reading from the N-terminus, the 144-residue chain is Small ribosomal subunit protein eS12z (144 aa).

At Ser2 the chain carries N-acetylserine.

Belongs to the eukaryotic ribosomal protein eS12 family.

In Arabidopsis thaliana (Mouse-ear cress), this protein is Small ribosomal subunit protein eS12z (RPS12A).